The sequence spans 215 residues: MKYELTATEARVIGCLLEKQVTTPEQYPLSVNGVVTACNQKTNREPVMNLTEQEVQEQLDNLVKRHFLRTVSGFGNRVTKYEQRFCNSEFGDLKLSAAEVALVTTLLLRGAQTPGELRSRASRMHEFSDMTEVESTLERLASREDGPYVVRLAREPGKRESRYMHLFCGDVDELSLQTSAPESASGDLQSRVEALESEVAELKQRLDSLLAHLGE.

This sequence belongs to the UPF0502 family.

The polypeptide is UPF0502 protein YceH (Salmonella heidelberg (strain SL476)).